The primary structure comprises 133 residues: Large ribosomal subunit protein bL19 (133 aa).

Belongs to the bacterial ribosomal protein bL19 family.

This protein is located at the 30S-50S ribosomal subunit interface and may play a role in the structure and function of the aminoacyl-tRNA binding site. This chain is Large ribosomal subunit protein bL19, found in Stenotrophomonas maltophilia (strain R551-3).